The following is a 605-amino-acid chain: Isocitrate dehydrogenase kinase/phosphatase (605 aa).

Residues 327–333 (APGIKGL) and Lys348 contribute to the ATP site. Asp383 is a catalytic residue.

It belongs to the AceK family.

It is found in the cytoplasm. The catalysed reaction is L-seryl-[isocitrate dehydrogenase] + ATP = O-phospho-L-seryl-[isocitrate dehydrogenase] + ADP + H(+). In terms of biological role, bifunctional enzyme which can phosphorylate or dephosphorylate isocitrate dehydrogenase (IDH) on a specific serine residue. This is a regulatory mechanism which enables bacteria to bypass the Krebs cycle via the glyoxylate shunt in response to the source of carbon. When bacteria are grown on glucose, IDH is fully active and unphosphorylated, but when grown on acetate or ethanol, the activity of IDH declines drastically concomitant with its phosphorylation. The chain is Isocitrate dehydrogenase kinase/phosphatase from Burkholderia orbicola (strain MC0-3).